We begin with the raw amino-acid sequence, 365 residues long: Dual-specificity RNA methyltransferase RlmN (365 aa).

Glu-91 serves as the catalytic Proton acceptor. The Radical SAM core domain occupies 97 to 337 (ETSRGTLCIS…TTVRKTRGDD (241 aa)). Cys-104 and Cys-342 form a disulfide bridge. Residues Cys-111, Cys-115, and Cys-118 each contribute to the [4Fe-4S] cluster site. Residues 168–169 (GE), Ser-200, 222–224 (SLH), and Asn-299 contribute to the S-adenosyl-L-methionine site. The active-site S-methylcysteine intermediate is Cys-342.

The protein belongs to the radical SAM superfamily. RlmN family. [4Fe-4S] cluster serves as cofactor.

It is found in the cytoplasm. It carries out the reaction adenosine(2503) in 23S rRNA + 2 reduced [2Fe-2S]-[ferredoxin] + 2 S-adenosyl-L-methionine = 2-methyladenosine(2503) in 23S rRNA + 5'-deoxyadenosine + L-methionine + 2 oxidized [2Fe-2S]-[ferredoxin] + S-adenosyl-L-homocysteine. The catalysed reaction is adenosine(37) in tRNA + 2 reduced [2Fe-2S]-[ferredoxin] + 2 S-adenosyl-L-methionine = 2-methyladenosine(37) in tRNA + 5'-deoxyadenosine + L-methionine + 2 oxidized [2Fe-2S]-[ferredoxin] + S-adenosyl-L-homocysteine. Specifically methylates position 2 of adenine 2503 in 23S rRNA and position 2 of adenine 37 in tRNAs. m2A2503 modification seems to play a crucial role in the proofreading step occurring at the peptidyl transferase center and thus would serve to optimize ribosomal fidelity. The polypeptide is Dual-specificity RNA methyltransferase RlmN (Nitrosospira multiformis (strain ATCC 25196 / NCIMB 11849 / C 71)).